We begin with the raw amino-acid sequence, 353 residues long: Histidinol-phosphate aminotransferase (353 aa).

K211 carries the N6-(pyridoxal phosphate)lysine modification.

This sequence belongs to the class-II pyridoxal-phosphate-dependent aminotransferase family. Histidinol-phosphate aminotransferase subfamily. Homodimer. Pyridoxal 5'-phosphate is required as a cofactor.

It carries out the reaction L-histidinol phosphate + 2-oxoglutarate = 3-(imidazol-4-yl)-2-oxopropyl phosphate + L-glutamate. It participates in amino-acid biosynthesis; L-histidine biosynthesis; L-histidine from 5-phospho-alpha-D-ribose 1-diphosphate: step 7/9. The polypeptide is Histidinol-phosphate aminotransferase (Klebsiella pneumoniae subsp. pneumoniae (strain ATCC 700721 / MGH 78578)).